A 124-amino-acid chain; its full sequence is Photoactive yellow protein (124 aa).

The PAS domain occupies 22 to 85 (AESLPFGAVL…GEFLKFNRTG (64 aa)). Cysteine 68 is subject to S-(4-hydroxycinnamyl)cysteine.

This sequence belongs to the photoactive yellow protein family. The 4-hydroxycinnamic acid (p-coumaric acid) chromophore is covalently bound via a thioester linkage.

This photoactive protein is a photoreceptor with kinetics similar to that of rhodopsin. In Rhodobacter capsulatus (strain ATCC BAA-309 / NBRC 16581 / SB1003), this protein is Photoactive yellow protein (pyp).